The primary structure comprises 384 residues: 23S rRNA (uracil(747)-C(5))-methyltransferase RlmC (384 aa).

Positions 7, 15, 18, and 94 each coordinate [4Fe-4S] cluster. The S-adenosyl-L-methionine site is built by glutamine 219, phenylalanine 248, glutamate 269, and asparagine 316. The Nucleophile role is filled by cysteine 343.

The protein belongs to the class I-like SAM-binding methyltransferase superfamily. RNA M5U methyltransferase family. RlmC subfamily.

It carries out the reaction uridine(747) in 23S rRNA + S-adenosyl-L-methionine = 5-methyluridine(747) in 23S rRNA + S-adenosyl-L-homocysteine + H(+). Its function is as follows. Catalyzes the formation of 5-methyl-uridine at position 747 (m5U747) in 23S rRNA. In Shewanella sp. (strain ANA-3), this protein is 23S rRNA (uracil(747)-C(5))-methyltransferase RlmC.